Reading from the N-terminus, the 294-residue chain is RAB7A-interacting MON1-CCZ1 complex subunit 1 (294 aa).

A2 bears the N-acetylalanine mark.

It belongs to the RIMOC1 family. Interacts with the MON1A-CCZ1B complex. Interacts with GDP-bound RAB7A and promotes its interaction with the MON1A-CCZ1B complex.

It localises to the cytoplasm. It is found in the cytosol. Functionally, plays an important role in the removal of damaged mitochondria via mitophagy by controlling the stability and localization of RAB7A. Required for the recruitment of RAB7A and ATG9A vesicles to damaged mitochondria and promotes the stability of RAB7A by inhibiting its proteasomal degradation during mitophagy. The polypeptide is RAB7A-interacting MON1-CCZ1 complex subunit 1 (Mus musculus (Mouse)).